Reading from the N-terminus, the 430-residue chain is Enolase (430 aa).

The sufficient for secretion stretch occupies residues 1-140 (MPYIVDVYAR…YQYLGGFNSK (140 aa)). The residue at position 141 (Thr-141) is a Phosphothreonine. Gln-163 provides a ligand contact to (2R)-2-phosphoglycerate. Catalysis depends on Glu-205, which acts as the Proton donor. Asp-242 is a binding site for Mg(2+). At Ser-259 the chain carries Phosphoserine. Tyr-281 bears the Phosphotyrosine mark. Positions 287 and 314 each coordinate Mg(2+). Residue Ser-325 is modified to Phosphoserine. 4 residues coordinate (2R)-2-phosphoglycerate: Lys-339, Arg-368, Ser-369, and Lys-390. Residue Lys-339 is the Proton acceptor of the active site.

Belongs to the enolase family. In terms of assembly, homooctamer. Component of the RNA degradosome complex composed of rny, rnjA, rnjB, pnp, pfkA and eno (although rnjA and rnjB's presence is controversial). It depends on Mg(2+) as a cofactor. Post-translationally, phosphorylated during sporulation.

It localises to the cytoplasm. The protein localises to the secreted. It is found in the cell surface. It catalyses the reaction (2R)-2-phosphoglycerate = phosphoenolpyruvate + H2O. It participates in carbohydrate degradation; glycolysis; pyruvate from D-glyceraldehyde 3-phosphate: step 4/5. Its activity is regulated as follows. Covalent binding to the substrate (probably 2-PG) at Lys-339 of a small fraction of enolase causes inactivation of the enzyme, and possibly serves as a signal for the export of the protein. Citrate acts as a non-competitive inhibitor for both forward and reverse reactions, probably by chelating Mg(2+). Functionally, catalyzes the reversible conversion of 2-phosphoglycerate (2-PG) into phosphoenolpyruvate (PEP). It is essential for the degradation of carbohydrates via glycolysis. Its function is as follows. A component of the RNA degradosome, a multi-enzyme complex involved in RNA processing and messenger RNA degradation. The sequence is that of Enolase from Bacillus subtilis (strain 168).